The primary structure comprises 888 residues: Transmembrane channel-like protein 2 (888 aa).

The disordered stretch occupies residues 1–128 (MSPQLKSLDE…SLGSSVSTGD (128 aa)). Residues 1–228 (MSPQLKSLDE…KIKDIESHFG (228 aa)) lie on the Cytoplasmic side of the membrane. Composition is skewed to basic and acidic residues over residues 7 to 16 (SLDEEGDKSA), 32 to 44 (DGHRAQSSRKDPA), and 87 to 110 (RTSLKEQRASPKKEREALRKEAGK). Positions 117–128 (STSLGSSVSTGD) are enriched in polar residues. The helical transmembrane segment at 229–266 (SSVASYFIFLRWMYGVNLVLFGLIFGLVIIPEVLMGMP) threads the bilayer. At 267-317 (YGSIPRKTVPRAEEERAMDFSVLWDFEGYIKYSALFYGYYNNQRTIGWLRY) the chain is on the extracellular side. The chain crosses the membrane as a helical span at residues 318–350 (RLPMAYFMVGVSVFGYSLMIVIRSMASNTQGST). Over 351 to 406 (SEGDSDSFTFSFKMFTSWDYLIGNSETADNKYVSITTSFKESIVDEQESNKEGNIH) the chain is Cytoplasmic. Residues 407 to 437 (LTRFLRVLANFLILCCLCGSGYLIYFVVKRS) traverse the membrane as a helical segment. At 438 to 447 (QEFSKMQNVS) the chain is on the extracellular side. Residues 448–475 (WYERNEVEIVMSLLGMFCPPLFETIAAL) form a helical membrane-spanning segment. The Cytoplasmic segment spans residues 476 to 479 (ENYH). The chain crosses the membrane as a helical span at residues 480–514 (PRTGLKWQLGRIFALFLGNLYTFLLALMDDVHLKL). Over 515-556 (SNEEKIKNITHWTLFNYYNSSGGNESVPRPPPHPADVPRGSC) the chain is Extracellular. The helical transmembrane segment at 557–594 (WETAVGIEFMRLTVSDMLVTYLTILVGDFLRACFVRFM) threads the bilayer. At 595–613 (NHCWCWDLEAGFPSYAEFD) the chain is on the cytoplasmic side. A helical transmembrane segment spans residues 614–634 (ISGNVLGLIFNQGMIWMGSFY). Residues 635–637 (APG) lie on the Extracellular side of the membrane. A helical transmembrane segment spans residues 638–660 (LVGINVLRLLTSMYFQCWAVMSS). The Cytoplasmic portion of the chain corresponds to 661–674 (NVPHERVFKASRSN). Residues 675-698 (NFYMGLLLLVLFLSLLPVAYTVMS) traverse the membrane as a helical segment. At 699-741 (LPPSFDCGPFSGKNRMYDVLHETIENDFPKFLGKIFAFLANPG) the chain is on the extracellular side. A helical transmembrane segment spans residues 742–775 (LIIPAILLMFLAIYYLNSVSKSLSRANAQLRKKI). The Cytoplasmic portion of the chain corresponds to 776–888 (QALREVEKNH…SGKRTQRPHN (113 aa)). A disordered region spans residues 813 to 888 (LTKEEPTSHS…SGKRTQRPHN (76 aa)). 2 stretches are compositionally biased toward polar residues: residues 836–851 (PHTSSTEGGASPSTSW) and 866–881 (GQPQSQTYTGRSPSGK).

The protein belongs to the TMC family. Forms the MET channel composed of TMC dimer (TMC1 or TMC2), TMIE, TOMT, CIB (CIB2 or CIB3), LHFPL5 and PDH15. The interaction of TMC1 and TMC2 with TOMT is required for the transportation of TMC1/2 into the stereocilia of hair cells. Interacts (via N-terminus) with both isoforms CD1 and CD3 of PCDH15. Can form a heterodimer with TMC1, TMC5 or TMC7. In terms of tissue distribution, inner ear and testis. Expressed in cochlear inner and outer hair cells and vestibular organ hair cells.

The protein resides in the cell membrane. It catalyses the reaction Ca(2+)(in) = Ca(2+)(out). Pore-forming subunit of the mechanotransducer (MET) non-selective cation channel complex located at the tips of stereocilia of cochlear hair cells and that mediates sensory transduction in the auditory system. The MET complex is composed of two dimeric pore-forming ion-conducting transmembrane TMC (TMC1 or TMC2) subunits, several auxiliary proteins including LHFPL5, TMIE, CIB2/3 and TOMT, the tip-link PCDH15, and possibly the PIEZO subunits. MET channel is activated by tension in the tip-link extending from the side wall of one stereocilium to the tip of the adjacent shorter stereocilium, where the channel is located. TMC2 MET channel is highly permeable to calcium and likely transports monovalent cations. Also involved in vestibular hair cell transduction current of the mammalian inner ear. The sequence is that of Transmembrane channel-like protein 2 from Mus musculus (Mouse).